Here is a 286-residue protein sequence, read N- to C-terminus: tRNA pseudouridine synthase A (286 aa).

Aspartate 60 functions as the Nucleophile in the catalytic mechanism. Tyrosine 132 serves as a coordination point for substrate.

Belongs to the tRNA pseudouridine synthase TruA family. Homodimer.

It carries out the reaction uridine(38/39/40) in tRNA = pseudouridine(38/39/40) in tRNA. Formation of pseudouridine at positions 38, 39 and 40 in the anticodon stem and loop of transfer RNAs. This Mycobacterium leprae (strain TN) protein is tRNA pseudouridine synthase A.